The primary structure comprises 420 residues: tRNA (guanine-N(7)-)-methyltransferase non-catalytic subunit TRM82 (420 aa).

Positions 59–68 (KENDSKRQKS) are enriched in basic and acidic residues. Positions 59–82 (KENDSKRQKSESGQAKVSKIPTPG) are disordered. WD repeat units follow at residues 87–127 (PIYN…DNCL), 179–220 (GHVS…VIKN), 224–266 (GHHE…AKIE), and 340–379 (SYED…EETN).

Belongs to the WD repeat TRM82 family. In terms of assembly, forms a heterodimer with the catalytic subunit TRM8.

The protein resides in the nucleus. The protein operates within tRNA modification; N(7)-methylguanine-tRNA biosynthesis. Required for the formation of N(7)-methylguanine at position 46 (m7G46) in tRNA. In the complex, it is required to stabilize and induce conformational changes of the catalytic subunit. This chain is tRNA (guanine-N(7)-)-methyltransferase non-catalytic subunit TRM82, found in Meyerozyma guilliermondii (strain ATCC 6260 / CBS 566 / DSM 6381 / JCM 1539 / NBRC 10279 / NRRL Y-324) (Yeast).